Reading from the N-terminus, the 2335-residue chain is Histone-lysine N-methyltransferase ATXR3 (2335 aa).

Disordered stretches follow at residues 30-142 (NESK…FKDE), 332-355 (STGNRLKRHGAEPDSIERKHSYAD), 371-556 (CSRS…SSSK), and 902-961 (DQVP…KTDT). 2 stretches are compositionally biased toward polar residues: residues 31-46 (ESKTAATTENGHTSIA) and 53-62 (QPANKPSASS). Positions 65–84 (VKKKRIVKVIRKVVKRRPKQ) are enriched in basic residues. The Nuclear localization signal 1 signature appears at 67–74 (KKRIVKVI). Over residues 97–112 (PPSQVVQLPAESQLQI) the composition is skewed to polar residues. Composition is skewed to basic and acidic residues over residues 340-353 (HGAEPDSIERKHSY), 371-390 (CSRSLHSDHYSQHSAERLYR), and 430-452 (WSPHDRSRYHENRDRSPYARERS). Basic residues predominate over residues 461 to 475 (HARKRSPRDRRHHDY). 3 stretches are compositionally biased toward basic and acidic residues: residues 485 to 498 (SPHDRSRPSDRRDY), 507 to 548 (QSDR…ESNG), and 910 to 921 (PRAKVRSKERCP). The Nuclear localization signal 2 motif lies at 527-534 (ERRDCQTG). Residues 922–932 (SRPARPSPASS) are compositionally biased toward low complexity. The span at 941 to 961 (SHSQSTASTGQDSQGLWKTDT) shows a compositional bias: polar residues. Residues 1382–1389 (ARRSSAIL) carry the Nuclear localization signal 3 motif. The tract at residues 1532 to 1572 (NRKSFSSESDTSSELSDNGKSDNYSSASASESESDIRSEGR) is disordered. Over residues 1535–1547 (SFSSESDTSSELS) the composition is skewed to low complexity. Residues 1765–1904 (KEIESRSDDK…YGEEITFDYN (140 aa)) enclose the SET domain. Residue C1868 coordinates Zn(2+). Position 1903 (Y1903) interacts with S-adenosyl-L-methionine. One can recognise a Post-SET domain in the interval 1914–1930 (EASVCLCGSQVCRGSYL). The Zn(2+) site is built by C1918, C1920, and C1925.

This sequence belongs to the class V-like SAM-binding methyltransferase superfamily. Histone-lysine methyltransferase family. TRX/MLL subfamily. As to expression, expressed in roots, leaves, stems and inflorescences.

It is found in the nucleus. It carries out the reaction L-lysyl(4)-[histone H3] + 3 S-adenosyl-L-methionine = N(6),N(6),N(6)-trimethyl-L-lysyl(4)-[histone H3] + 3 S-adenosyl-L-homocysteine + 3 H(+). Functionally, histone methyltransferase specifically required for trimethylation of 'Lys-4' of histone H3 (H3K4me3) and is crucial for both sporophyte and gametophyte development. Function as a diurnal 'writer' to counteract the nocturne 'eraser' demethylase activity of JMJ14 thus orchestrating the circadian rhythm of histone modifications (e.g. H3K4me3) and modulating the rhythmic expression of diurnal target genes; this mechanism relies also on the circadian clock oscillators CCA1 and LHY. In Arabidopsis thaliana (Mouse-ear cress), this protein is Histone-lysine N-methyltransferase ATXR3.